A 238-amino-acid polypeptide reads, in one-letter code: Probable transcriptional regulatory protein CHU_3516 (238 aa).

This sequence belongs to the TACO1 family.

It localises to the cytoplasm. This is Probable transcriptional regulatory protein CHU_3516 from Cytophaga hutchinsonii (strain ATCC 33406 / DSM 1761 / CIP 103989 / NBRC 15051 / NCIMB 9469 / D465).